Here is a 159-residue protein sequence, read N- to C-terminus: Phosphopantetheine adenylyltransferase (159 aa).

Thr10 provides a ligand contact to substrate. ATP is bound by residues 10–11 (TF) and His18. Substrate contacts are provided by Lys42, Met74, and Arg88. ATP contacts are provided by residues 89-91 (GLR), Glu99, and 124-130 (WSFISSS).

The protein belongs to the bacterial CoaD family. Homohexamer. Mg(2+) serves as cofactor.

Its subcellular location is the cytoplasm. The enzyme catalyses (R)-4'-phosphopantetheine + ATP + H(+) = 3'-dephospho-CoA + diphosphate. It functions in the pathway cofactor biosynthesis; coenzyme A biosynthesis; CoA from (R)-pantothenate: step 4/5. Its function is as follows. Reversibly transfers an adenylyl group from ATP to 4'-phosphopantetheine, yielding dephospho-CoA (dPCoA) and pyrophosphate. The chain is Phosphopantetheine adenylyltransferase from Pectobacterium carotovorum subsp. carotovorum (strain PC1).